The following is an 880-amino-acid chain: EP-cadherin (880 aa).

Positions 1–28 (MGSTRLRNASVWLCGLLCLLQVVPSINA) are cleaved as a signal peptide. Positions 29–155 (DVSGCKPGFS…THTGLKRKKR (127 aa)) are excised as a propeptide. Asn61 carries an N-linked (GlcNAc...) asparagine glycan. Cadherin domains are found at residues 156–263 (DWVI…RPKF), 264–376 (TQDV…APIF), 377–487 (DPKT…APFF), 488–593 (VPAV…DNGP), and 594–704 (VPSP…GFDL). Over 156–703 (DWVIPPIKVS…CQEKLVGGFD (548 aa)) the chain is Extracellular. O-linked (GalNAc...) threonine glycans are attached at residues Thr343, Thr382, and Thr400. A glycan (N-linked (GlcNAc...) asparagine) is linked at Asn425. Residues Thr428, Thr469, Thr471, Thr473, and Thr475 are each glycosylated (O-linked (GalNAc...) threonine). A glycan (N-linked (GlcNAc...) asparagine) is linked at Asn558. O-linked (GalNAc...) threonine glycosylation is found at Thr562, Thr576, Thr578, and Thr580. 2 disulfide bridges follow: Cys603–Cys687 and Cys685–Cys694. A glycan (N-linked (GlcNAc...) asparagine) is linked at Asn681. A helical membrane pass occupies residues 704–728 (LPIILVILGSVLALLILFLLLLLFL). Residues 729 to 880 (KRKKVVKEPL…DMYGGDDDEE (152 aa)) are Cytoplasmic-facing. Residues 790–826 (PAPHYRPRPSNPDEIGNFIDENLDAADNDPTAPPYDS) form a disordered region.

In terms of assembly, interacts with CTNNB1.

Its subcellular location is the cell membrane. In terms of biological role, cadherins are calcium-dependent cell adhesion proteins. They preferentially interact with themselves in a homophilic manner in connecting cells; cadherins may thus contribute to the sorting of heterogeneous cell types. This is EP-cadherin from Xenopus laevis (African clawed frog).